The following is a 174-amino-acid chain: MERQCSTKSQSWCVRTAEDEENNFMMICRKGNVYELMELAPFISVDGHLLHKYDHRGRQCIHMVALYDRKNAIMKIEILVNMGADINARERNTGNSLLHIAVKTKNYELAEWLCREPTVNLGAINYEHHTAYHMAYYLHDEKMKELLITNRAVCDNPEGIKMSEDDISDFSSDN.

ANK repeat units lie at residues 56–88 and 93–123; these read RGRQCIHMVALYDRKNAIMKIEILVNMGADINA and TGNSLLHIAVKTKNYELAEWLCREPTVNLGA.

Belongs to the polydnaviridae I-Kappa-B-like protein family.

In terms of biological role, suppresses the host immune response through NF-kappa-B inactivation. Possesses ankyrin repeat domains required for NF-kappa-B binding but lacks the regulatory regions required for dissociation from NF-kappa-B and degradation. Therefore, prevents host NF-kappa-B release and subsequent activation. The protein is I-Kappa-B like protein C1 (C1) of Microplitis demolitor bracovirus (isolate Webb) (MdBV).